A 523-amino-acid polypeptide reads, in one-letter code: 2-hydroxyisoflavanone synthase (523 aa).

Residues 2–22 form a helical membrane-spanning segment; the sequence is LVELAITLLVIALFIHLRPTP. Cys450 provides a ligand contact to heme.

This sequence belongs to the cytochrome P450 family. The cofactor is heme.

It is found in the microsome membrane. The catalysed reaction is (2S)-liquiritigenin + reduced [NADPH--hemoprotein reductase] + O2 = (2R,3S)-2,4',7-trihydroxyisoflavanone + oxidized [NADPH--hemoprotein reductase] + H2O + H(+). It carries out the reaction (2S)-naringenin + reduced [NADPH--hemoprotein reductase] + O2 = 2-hydroxy-2,3-dihydrogenistein + oxidized [NADPH--hemoprotein reductase] + H2O + H(+). Its function is as follows. 2-hydroxyisoflavanone synthase, which catalyzes the hydroxylation associated with 1,2-aryl migration of flavanones. Converts liquiritigenin and naringenin into highly unstable precursors of the isoflavones daidzein and genistein. The sequence is that of 2-hydroxyisoflavanone synthase (CYP93C2) from Glycyrrhiza uralensis (Chinese licorice).